A 166-amino-acid polypeptide reads, in one-letter code: UPF0336 protein ML1908 (166 aa).

Belongs to the UPF0336 family.

The protein is UPF0336 protein ML1908 of Mycobacterium leprae (strain TN).